The chain runs to 294 residues: Nucleotide-binding protein CLL_A3342 (294 aa).

8–15 contributes to the ATP binding site; the sequence is GLSGAGKT. 59–62 serves as a coordination point for GTP; the sequence is DIRG.

This sequence belongs to the RapZ-like family.

In terms of biological role, displays ATPase and GTPase activities. The chain is Nucleotide-binding protein CLL_A3342 from Clostridium botulinum (strain Eklund 17B / Type B).